We begin with the raw amino-acid sequence, 182 residues long: MRVLGIDPGLRRTGFGVIDAEGMRLRYVASGTIVVPPALSLPERLKVILDNLREVARETRPDVAALEIVFLNTNPASTLLLGQARGAALCALADSALDVHEYTALQIKKAVVGTGRAAKEQVQMMVQRLLSLDGTPAPDSADALACAICHAHVGPLHDRLDRLGTAAQLGSRPRLRNGRLVG.

Active-site residues include Asp-7, Glu-67, and Asp-139. Mg(2+) is bound by residues Asp-7, Glu-67, and Asp-139.

This sequence belongs to the RuvC family. As to quaternary structure, homodimer which binds Holliday junction (HJ) DNA. The HJ becomes 2-fold symmetrical on binding to RuvC with unstacked arms; it has a different conformation from HJ DNA in complex with RuvA. In the full resolvosome a probable DNA-RuvA(4)-RuvB(12)-RuvC(2) complex forms which resolves the HJ. Mg(2+) is required as a cofactor.

It localises to the cytoplasm. The catalysed reaction is Endonucleolytic cleavage at a junction such as a reciprocal single-stranded crossover between two homologous DNA duplexes (Holliday junction).. Its function is as follows. The RuvA-RuvB-RuvC complex processes Holliday junction (HJ) DNA during genetic recombination and DNA repair. Endonuclease that resolves HJ intermediates. Cleaves cruciform DNA by making single-stranded nicks across the HJ at symmetrical positions within the homologous arms, yielding a 5'-phosphate and a 3'-hydroxyl group; requires a central core of homology in the junction. The consensus cleavage sequence is 5'-(A/T)TT(C/G)-3'. Cleavage occurs on the 3'-side of the TT dinucleotide at the point of strand exchange. HJ branch migration catalyzed by RuvA-RuvB allows RuvC to scan DNA until it finds its consensus sequence, where it cleaves and resolves the cruciform DNA. The sequence is that of Crossover junction endodeoxyribonuclease RuvC from Bordetella parapertussis (strain 12822 / ATCC BAA-587 / NCTC 13253).